Here is a 77-residue protein sequence, read N- to C-terminus: Large ribosomal subunit protein bL28 (77 aa).

This sequence belongs to the bacterial ribosomal protein bL28 family.

This is Large ribosomal subunit protein bL28 from Acidovorax ebreus (strain TPSY) (Diaphorobacter sp. (strain TPSY)).